The following is a 272-amino-acid chain: Ribosomal RNA small subunit methyltransferase A (272 aa).

S-adenosyl-L-methionine contacts are provided by His13, Leu15, Gly40, Glu61, Asp85, and Asn105.

This sequence belongs to the class I-like SAM-binding methyltransferase superfamily. rRNA adenine N(6)-methyltransferase family. RsmA subfamily.

Its subcellular location is the cytoplasm. It catalyses the reaction adenosine(1518)/adenosine(1519) in 16S rRNA + 4 S-adenosyl-L-methionine = N(6)-dimethyladenosine(1518)/N(6)-dimethyladenosine(1519) in 16S rRNA + 4 S-adenosyl-L-homocysteine + 4 H(+). Its function is as follows. Specifically dimethylates two adjacent adenosines (A1518 and A1519) in the loop of a conserved hairpin near the 3'-end of 16S rRNA in the 30S particle. May play a critical role in biogenesis of 30S subunits. This is Ribosomal RNA small subunit methyltransferase A from Bacteroides fragilis (strain ATCC 25285 / DSM 2151 / CCUG 4856 / JCM 11019 / LMG 10263 / NCTC 9343 / Onslow / VPI 2553 / EN-2).